The following is a 334-amino-acid chain: MKETIAYLGMGMWGFSLANLLANNGHRVVGWARNPSLIEQLSTQRQHPAAPHVTIPSNLSFTSSMEEALDGATMIVEGVTSAGMRPVLNQLKSITDLQIPLVITSKGIEQNTGLLLSEIALEIFGKPAAKYLGYLSGPSIASEVLRGCPCSVVISAYDPATLKQIHQAFLTPTFRVYPNSDLKGVALGGALKNVIAIACGISDGFRFGDNAKSGLVTRGLHEIRKFATIMGCRPDTLNGLAGLGDLCTTCFSAFSRNTLFGKMLAEGLTPEQAKTKIGMVVEGVYTALSAHQIATHHKIDMPITTGVYRVLYENLDIQKGIAQLLQRNTKEEYL.

Positions 13, 33, and 106 each coordinate NADPH. 3 residues coordinate sn-glycerol 3-phosphate: Lys-106, Gly-137, and Ser-139. Ala-141 serves as a coordination point for NADPH. Positions 192, 245, 255, 256, and 257 each coordinate sn-glycerol 3-phosphate. The Proton acceptor role is filled by Lys-192. Arg-256 serves as a coordination point for NADPH. Residues Val-280 and Glu-282 each contribute to the NADPH site.

Belongs to the NAD-dependent glycerol-3-phosphate dehydrogenase family.

The protein resides in the cytoplasm. The catalysed reaction is sn-glycerol 3-phosphate + NAD(+) = dihydroxyacetone phosphate + NADH + H(+). It carries out the reaction sn-glycerol 3-phosphate + NADP(+) = dihydroxyacetone phosphate + NADPH + H(+). It participates in membrane lipid metabolism; glycerophospholipid metabolism. Its function is as follows. Catalyzes the reduction of the glycolytic intermediate dihydroxyacetone phosphate (DHAP) to sn-glycerol 3-phosphate (G3P), the key precursor for phospholipid synthesis. The protein is Glycerol-3-phosphate dehydrogenase [NAD(P)+] of Chlamydia muridarum (strain MoPn / Nigg).